Here is a 329-residue protein sequence, read N- to C-terminus: DNA-directed RNA polymerase subunit alpha (329 aa).

Residues 1–235 (MQNSIIGFLK…EQLEAFVDLR (235 aa)) are alpha N-terminal domain (alpha-NTD). The segment at 249 to 329 (FEPILLRPVD…KWPPSSILEE (81 aa)) is alpha C-terminal domain (alpha-CTD).

The protein belongs to the RNA polymerase alpha chain family. As to quaternary structure, homodimer. The RNAP catalytic core consists of 2 alpha, 1 beta, 1 beta' and 1 omega subunit. When a sigma factor is associated with the core the holoenzyme is formed, which can initiate transcription.

It catalyses the reaction RNA(n) + a ribonucleoside 5'-triphosphate = RNA(n+1) + diphosphate. Functionally, DNA-dependent RNA polymerase catalyzes the transcription of DNA into RNA using the four ribonucleoside triphosphates as substrates. The sequence is that of DNA-directed RNA polymerase subunit alpha from Buchnera aphidicola subsp. Schizaphis graminum (strain Sg).